A 249-amino-acid chain; its full sequence is uncharacterized protein (249 aa).

The S4 RNA-binding domain maps to Val-4–Pro-71. Asp-106 functions as the Nucleophile in the catalytic mechanism.

Belongs to the pseudouridine synthase RsuA family.

It catalyses the reaction a uridine in RNA = a pseudouridine in RNA. This is an uncharacterized protein from Aquifex aeolicus (strain VF5).